The following is a 316-amino-acid chain: Pantothenate kinase (316 aa).

ATP is bound at residue 95 to 102 (GSVSVGKS).

It belongs to the prokaryotic pantothenate kinase family.

It is found in the cytoplasm. It carries out the reaction (R)-pantothenate + ATP = (R)-4'-phosphopantothenate + ADP + H(+). The protein operates within cofactor biosynthesis; coenzyme A biosynthesis; CoA from (R)-pantothenate: step 1/5. The chain is Pantothenate kinase from Actinobacillus pleuropneumoniae serotype 7 (strain AP76).